A 472-amino-acid polypeptide reads, in one-letter code: Dihydrolipoyl dehydrogenase 2 (472 aa).

Residues 39–47 (ERDAYGGTC), Lys-56, and Ala-118 contribute to the FAD site. A disulfide bond links Cys-47 and Cys-52. Residues 186-190 (GAGYI), Glu-209, and 275-278 (AVGR) contribute to the NAD(+) site. 2 residues coordinate FAD: Asp-318 and Ala-326. The Proton acceptor role is filled by His-450.

The protein belongs to the class-I pyridine nucleotide-disulfide oxidoreductase family. Homodimer. Requires FAD as cofactor.

The protein resides in the cytoplasm. The enzyme catalyses N(6)-[(R)-dihydrolipoyl]-L-lysyl-[protein] + NAD(+) = N(6)-[(R)-lipoyl]-L-lysyl-[protein] + NADH + H(+). This Haloarcula marismortui (strain ATCC 43049 / DSM 3752 / JCM 8966 / VKM B-1809) (Halobacterium marismortui) protein is Dihydrolipoyl dehydrogenase 2 (lpdA2).